A 269-amino-acid polypeptide reads, in one-letter code: Intermembrane phospholipid transport system ATP-binding protein MlaF (269 aa).

Residues Val-9 to Asp-245 form the ABC transporter domain. Gly-41–Thr-48 lines the ATP pocket.

This sequence belongs to the ABC transporter superfamily. MlaF family. As to quaternary structure, the complex is composed of two ATP-binding proteins (MlaF), two transmembrane proteins (MlaE), two cytoplasmic solute-binding proteins (MlaB) and six periplasmic solute-binding proteins (MlaD).

Its subcellular location is the cell inner membrane. Functionally, part of the ABC transporter complex MlaFEDB, which is involved in a phospholipid transport pathway that maintains lipid asymmetry in the outer membrane by retrograde trafficking of phospholipids from the outer membrane to the inner membrane. Responsible for energy coupling to the transport system. The chain is Intermembrane phospholipid transport system ATP-binding protein MlaF from Escherichia coli O157:H7.